A 363-amino-acid chain; its full sequence is DNA replication and repair protein RecF (363 aa).

Position 30-37 (30-37) interacts with ATP; the sequence is GDNAQGKT.

The protein belongs to the RecF family.

Its subcellular location is the cytoplasm. In terms of biological role, the RecF protein is involved in DNA metabolism; it is required for DNA replication and normal SOS inducibility. RecF binds preferentially to single-stranded, linear DNA. It also seems to bind ATP. In Syntrophotalea carbinolica (strain DSM 2380 / NBRC 103641 / GraBd1) (Pelobacter carbinolicus), this protein is DNA replication and repair protein RecF.